A 683-amino-acid polypeptide reads, in one-letter code: Dipeptidyl-peptidase 5 (683 aa).

The first 19 residues, 1–19, serve as a signal peptide directing secretion; sequence MHSLFKQLVFFLVMTLTAA. 6 N-linked (GlcNAc...) asparagine glycosylation sites follow: asparagine 53, asparagine 69, asparagine 103, asparagine 116, asparagine 126, and asparagine 400. Residues serine 535, aspartate 617, and histidine 649 each act as charge relay system in the active site.

It belongs to the peptidase S9C family.

It localises to the secreted. It is found in the cytoplasm. Its subcellular location is the nucleus. The chain is Dipeptidyl-peptidase 5 from Schizosaccharomyces pombe (strain 972 / ATCC 24843) (Fission yeast).